We begin with the raw amino-acid sequence, 247 residues long: 2-dehydro-3-deoxy-phosphogluconate aldolase (247 aa).

Belongs to the DagF family.

The catalysed reaction is 2-dehydro-3-deoxy-6-phospho-D-gluconate = D-glyceraldehyde 3-phosphate + pyruvate. Involved in the catabolism of D-glucosaminate. Catalyzes the conversion of keto-3-deoxygluconate 6-phosphate (KDGP) to yield pyruvate and glyceraldehyde-3-phosphate. The polypeptide is 2-dehydro-3-deoxy-phosphogluconate aldolase (Salmonella typhimurium (strain 14028s / SGSC 2262)).